Consider the following 102-residue polypeptide: Nucleoid-associated protein BCc_301 (102 aa).

This sequence belongs to the YbaB/EbfC family. Homodimer.

The protein localises to the cytoplasm. Its subcellular location is the nucleoid. Its function is as follows. Binds to DNA and alters its conformation. May be involved in regulation of gene expression, nucleoid organization and DNA protection. The polypeptide is Nucleoid-associated protein BCc_301 (Buchnera aphidicola subsp. Cinara cedri (strain Cc)).